A 118-amino-acid polypeptide reads, in one-letter code: UPF0344 protein Aflv_2205 (118 aa).

4 consecutive transmembrane segments (helical) span residues 4-24 (AHIT…ALQA), 32-52 (MLHM…AWIL), 60-80 (FLYI…EMIL), and 96-116 (FIVA…GFSF).

Belongs to the UPF0344 family.

It localises to the cell membrane. The sequence is that of UPF0344 protein Aflv_2205 from Anoxybacillus flavithermus (strain DSM 21510 / WK1).